The following is a 190-amino-acid chain: Dynactin subunit 6 (190 aa).

Phosphothreonine; by CDK1 is present on Thr186.

The protein belongs to the dynactin subunits 5/6 family. Dynactin subunit 6 subfamily. As to quaternary structure, subunit of dynactin, a multiprotein complex part of a tripartite complex with dynein and a adapter, such as BICDL1, BICD2 or HOOK3. The dynactin complex is built around ACTR1A/ACTB filament and consists of an actin-related filament composed of a shoulder domain, a pointed end and a barbed end. Its length is defined by its flexible shoulder domain. The soulder is composed of 2 DCTN1 subunits, 4 DCTN2 and 2 DCTN3. The 4 DCNT2 (via N-terminus) bind the ACTR1A filament and act as molecular rulers to determine the length. The pointed end is important for binding dynein-dynactin cargo adapters. Consists of 4 subunits: ACTR10, DCNT4, DCTN5 and DCTN6. Within the complex DCTN6 forms a heterodimer with DCTN5. The barbed end is composed of a CAPZA1:CAPZB heterodimers, which binds ACTR1A/ACTB filament and dynactin and stabilizes dynactin. Interacts with PLK1. Interacts with N4BP2L1. Phosphorylation at Thr-186 by CDK1 during mitotic prometaphase creates a binding site for PLK1 that facilitates its recruitment to kinetochores. As to expression, ubiquitous.

The protein resides in the cytoplasm. The protein localises to the cytoskeleton. It is found in the chromosome. Its subcellular location is the centromere. It localises to the kinetochore. Its function is as follows. Part of the dynactin complex that activates the molecular motor dynein for ultra-processive transport along microtubules. The chain is Dynactin subunit 6 from Homo sapiens (Human).